Here is a 510-residue protein sequence, read N- to C-terminus: MKEEVLGLPIEKIQEKIKEYDFSPRISNIGYVKSVGDGVAQVSLLNAAFVGEIVIFESGIQGMVLSLKEDSVGVILFGRDEYVKEGEVVYSTGKILQVPTGSGFLGRVIDPLGNPIDGGGLIFPEAYVPVDNEAPSIFDREPVKEPLYTGIRAIDALIPIGHGQRELILGDRQTGKTTIAIDTIISQRNYGTICIYVAIAQKRTNIARIVQTLREYGALSNTIVIATFPDDPPALRYIAPMAGCAMGEYFMRQGERVLIVYDDLTKHANTYREVALLLRRVPGREAYPGDIFYLHSHLLERAAKLSRKLGGGALTALPIAETLAGEISTYIPTNLISITDGQIYLDTALFNAGVRPAINVGLSVSRVGGSAQPKGMRQVAGRLRLDLAQYREYAMFLEFGTELDMATKKKIERGRRIEELLKQGAHEVQSVEEQIITFYLANGGFLDNYPVEKVKDVVIKYIAYLKLKYSSVLTLLREQLELSDQIIYQIHNIFQEFEREVYANPSNPQA.

170–177 (GDRQTGKT) contributes to the ATP binding site.

This sequence belongs to the ATPase alpha/beta chains family. F-type ATPases have 2 components, CF(1) - the catalytic core - and CF(0) - the membrane proton channel. CF(1) has five subunits: alpha(3), beta(3), gamma(1), delta(1), epsilon(1). CF(0) has three main subunits: a(1), b(2) and c(9-12). The alpha and beta chains form an alternating ring which encloses part of the gamma chain. CF(1) is attached to CF(0) by a central stalk formed by the gamma and epsilon chains, while a peripheral stalk is formed by the delta and b chains.

It is found in the cell inner membrane. The enzyme catalyses ATP + H2O + 4 H(+)(in) = ADP + phosphate + 5 H(+)(out). Its function is as follows. Produces ATP from ADP in the presence of a proton gradient across the membrane. The alpha chain is a regulatory subunit. This Dictyoglomus thermophilum (strain ATCC 35947 / DSM 3960 / H-6-12) protein is ATP synthase subunit alpha.